Consider the following 288-residue polypeptide: Polyamine aminopropyltransferase (288 aa).

Positions 9-242 (SEWLDEYHQG…GLWSWTFASM (234 aa)) constitute a PABS domain. Residue Gln36 participates in S-methyl-5'-thioadenosine binding. Spermidine contacts are provided by His67 and Asp91. Residues Glu111 and 143 to 144 (NG) contribute to the S-methyl-5'-thioadenosine site. The active-site Proton acceptor is Asp162. Pro169 lines the S-methyl-5'-thioadenosine pocket.

This sequence belongs to the spermidine/spermine synthase family. As to quaternary structure, homodimer or homotetramer.

The protein resides in the cytoplasm. It carries out the reaction S-adenosyl 3-(methylsulfanyl)propylamine + putrescine = S-methyl-5'-thioadenosine + spermidine + H(+). Its pathway is amine and polyamine biosynthesis; spermidine biosynthesis; spermidine from putrescine: step 1/1. Functionally, catalyzes the irreversible transfer of a propylamine group from the amino donor S-adenosylmethioninamine (decarboxy-AdoMet) to putrescine (1,4-diaminobutane) to yield spermidine. The sequence is that of Polyamine aminopropyltransferase from Prochlorococcus marinus (strain NATL2A).